Consider the following 328-residue polypeptide: Malate dehydrogenase (328 aa).

12–18 (GAAGQIA) is a binding site for NAD(+). Substrate contacts are provided by R93 and R99. NAD(+) is bound by residues N106, Q113, and 130–132 (VGN). 2 residues coordinate substrate: N132 and R163. The active-site Proton acceptor is H188.

It belongs to the LDH/MDH superfamily. MDH type 2 family.

The catalysed reaction is (S)-malate + NAD(+) = oxaloacetate + NADH + H(+). Its function is as follows. Catalyzes the reversible oxidation of malate to oxaloacetate. The sequence is that of Malate dehydrogenase from Burkholderia lata (strain ATCC 17760 / DSM 23089 / LMG 22485 / NCIMB 9086 / R18194 / 383).